The chain runs to 589 residues: Class I diterpene synthase 2, chloroplastic (589 aa).

Mg(2+) is bound by residues aspartate 328, aspartate 332, asparagine 472, threonine 476, and glutamate 480. The DDXXD motif motif lies at 328 to 332 (DDFFD).

Belongs to the terpene synthase family. Mg(2+) is required as a cofactor. Mostly expressed in trichomes of leaves and fruits.

The protein localises to the plastid. The protein resides in the chloroplast. The enzyme catalyses 9alpha-copalyl diphosphate + H2O = (13S)-vitexifolin A + diphosphate. It carries out the reaction peregrinol diphosphate = (13R)-9,13-epoxylabd-14-ene + diphosphate. It catalyses the reaction peregrinol diphosphate + H2O = viteagnusin D + diphosphate. The protein operates within secondary metabolite biosynthesis; terpenoid biosynthesis. Its function is as follows. Involved in the biosynthesis of labdane-type diterpenoid including cleroda-dienols, and peregrinol lactones and furan derivatives, dopaminergic diterpenoids that can bind to dopamine receptors in the human pituitary gland, have probably ability to lower prolactin levels, and are used to treat menstrual cycle disorders (e.g. premenstrual syndrome and mastodynia). Terpene synthase the catalyzes the conversion of peregrinol diphosphate to viteagnusin D and 9,13(R)-epoxy-labd-14-ene, and of syn-copalyl diphosophate to vitexifolin A. The sequence is that of Class I diterpene synthase 2, chloroplastic from Vitex agnus-castus (Chaste tree).